The sequence spans 62 residues: Large ribosomal subunit protein bL28 (62 aa).

This sequence belongs to the bacterial ribosomal protein bL28 family.

This is Large ribosomal subunit protein bL28 from Aliarcobacter butzleri (strain RM4018) (Arcobacter butzleri).